The chain runs to 614 residues: Serine/threonine-protein kinase Pkn1 (614 aa).

The 264-residue stretch at 13-276 folds into the Protein kinase domain; sequence YKVIAELGHG…TSGEQLQVTL (264 aa). Residues 19–27 and Lys42 each bind ATP; that span reads LGHGLWSRD.

It belongs to the protein kinase superfamily. Ser/Thr protein kinase family. Interacts with PknD, interacts with and phosphorylates IncG. Post-translationally, autophosphorylates on serine and threonine residues. Present in elementary bodies 40 hours post-infection as 2 proteins of approximately 70 and 65 kDa; the smaller one may be due to differential phosphorylation or degradation.

It carries out the reaction L-seryl-[protein] + ATP = O-phospho-L-seryl-[protein] + ADP + H(+). The catalysed reaction is L-threonyl-[protein] + ATP = O-phospho-L-threonyl-[protein] + ADP + H(+). Its function is as follows. Together with the serine/threonine kinase PknD, may play a role in specific interactions with host proteins during host intracellular growth. Autophosphorylates and phosphorylates IncG, an inclusion-membrane protein required for the modification of the nascent chlamydial inclusion. In Chlamydia trachomatis serovar L2 (strain ATCC VR-902B / DSM 19102 / 434/Bu), this protein is Serine/threonine-protein kinase Pkn1 (pkn1).